We begin with the raw amino-acid sequence, 403 residues long: Neuromedin U receptor homolog nmur-2 (403 aa).

At 1-27 (MSQCTVEYNVSEITEYVLSTLGERCQS) the chain is on the extracellular side. Residues 28-48 (AGIVIPTVIIYGTIFLLGLFG) form a helical membrane-spanning segment. The Cytoplasmic segment spans residues 49-68 (NICTCIVIAANKSMHNPTNY). A helical membrane pass occupies residues 69 to 89 (YLFSLAVSDIIALILGLPMEF). At 90–109 (YQSLDYSYPYRFSEGICKAR) the chain is on the extracellular side. Residues 110–130 (AFLIEFTSYASIMIICCFSFE) form a helical membrane-spanning segment. At 131-151 (RWLAICHPLRSKIFSTLWRAN) the chain is on the cytoplasmic side. The helical transmembrane segment at 152 to 172 (VLIILAWTISFVCALPIAFIV) threads the bilayer. The Extracellular portion of the chain corresponds to 173–216 (QINKLPLPEDAKYQPWTNKVSTDGIFVLHTEFCAMNQSRPDQQK). A helical membrane pass occupies residues 217–237 (MIIIFAFTVFFVIPAIAIVIM). At 238–268 (YAHIAVQLESSEIDLKGDKMVKKRRNKSNRT) the chain is on the cytoplasmic side. Residues 269–289 (VLKMLLSVVITFFICWLPFHI) traverse the membrane as a helical segment. Topologically, residues 290 to 304 (QRLLSVYTTWSETTT) are extracellular. A helical membrane pass occupies residues 305–325 (ISPPVQFLSMIVFYISGFCYY). Over 326–403 (SNSAANPILY…PHRKLEVHNY (78 aa)) the chain is Cytoplasmic.

The protein belongs to the G-protein coupled receptor 1 family.

The protein resides in the membrane. In terms of biological role, putative G protein-coupled receptor for pyrokinin-like neuropeptide derived from the processing of the neuropeptide precursor capa-1. This Caenorhabditis elegans protein is Neuromedin U receptor homolog nmur-2.